We begin with the raw amino-acid sequence, 1086 residues long: Isoleucine--tRNA ligase (1086 aa).

Residues 53 to 63 (PFANGLPHYGH) carry the 'HIGH' region motif. Residues 624-628 (KLSKR) carry the 'KMSKS' region motif. Lys-627 lines the ATP pocket.

It belongs to the class-I aminoacyl-tRNA synthetase family. IleS type 2 subfamily. As to quaternary structure, monomer. Requires Zn(2+) as cofactor.

It is found in the cytoplasm. The enzyme catalyses tRNA(Ile) + L-isoleucine + ATP = L-isoleucyl-tRNA(Ile) + AMP + diphosphate. In terms of biological role, catalyzes the attachment of isoleucine to tRNA(Ile). As IleRS can inadvertently accommodate and process structurally similar amino acids such as valine, to avoid such errors it has two additional distinct tRNA(Ile)-dependent editing activities. One activity is designated as 'pretransfer' editing and involves the hydrolysis of activated Val-AMP. The other activity is designated 'posttransfer' editing and involves deacylation of mischarged Val-tRNA(Ile). The sequence is that of Isoleucine--tRNA ligase from Rickettsia typhi (strain ATCC VR-144 / Wilmington).